The sequence spans 475 residues: Isocitrate dehydrogenase [NADP] (475 aa).

T104 contacts NADP(+). S113, N115, R119, R129, and R153 together coordinate D-threo-isocitrate. D362 is a binding site for Mg(2+). Residues 394 to 400 (HGTAPKH), N407, Y446, and R450 each bind NADP(+).

This sequence belongs to the isocitrate and isopropylmalate dehydrogenases family. Homodimer. Mg(2+) serves as cofactor. Mn(2+) is required as a cofactor.

It is found in the cytoplasm. The catalysed reaction is D-threo-isocitrate + NADP(+) = 2-oxoglutarate + CO2 + NADPH. With respect to regulation, inhibited non-competitively by ADP and 2-oxoglutarate, with respect to isocitrate and in a competitive manner by NADPH. Functionally, catalyzes the oxidative decarboxylation of isocitrate to 2-oxoglutarate and carbon dioxide with the concomitant reduction of NADP(+). Is specific for NADP(+), cannot use NAD(+). The protein is Isocitrate dehydrogenase [NADP] of Synechocystis sp. (strain ATCC 27184 / PCC 6803 / Kazusa).